The following is a 196-amino-acid chain: 3-isopropylmalate dehydratase small subunit (196 aa).

It belongs to the LeuD family. LeuD type 1 subfamily. Heterodimer of LeuC and LeuD.

The catalysed reaction is (2R,3S)-3-isopropylmalate = (2S)-2-isopropylmalate. Its pathway is amino-acid biosynthesis; L-leucine biosynthesis; L-leucine from 3-methyl-2-oxobutanoate: step 2/4. Functionally, catalyzes the isomerization between 2-isopropylmalate and 3-isopropylmalate, via the formation of 2-isopropylmaleate. The sequence is that of 3-isopropylmalate dehydratase small subunit from Herpetosiphon aurantiacus (strain ATCC 23779 / DSM 785 / 114-95).